A 719-amino-acid polypeptide reads, in one-letter code: MVYQGNRITVTMLEDGIANMQYNAENESVNKFDTETNKQFAEVVNALEKADDVKGLIVTSSKGVFIAGADITEFVASFKQSEEEIKDWVININDAFNRFEDLPFPKVAAINGAALGGGCEMTLVCEYRVMSDKAIIGLPETQLGIFPGFGGTVRSTRVIGIDNALELIATGAPKKALDALKLGLVDATVAADDLQDAAIDLVKKCISGELDWKAKREEKLVAVKLNQLEQAMAFNSAKGMIFAKANPKQYPAPALAIAAIEKHVNLPRDKAIEVEAAGFAKAAKTPQAESLVGLFLSDQLVKKLAKQHSKKAHEINEAAVLGAGIMGGGIAYQAASKGLPIIMKDIKSEQLDLGMGEASKLLGKMVDRGKMTPAKMGETLSRIRPTLNYGDFAETDIVIEAVVENPNVKRAVLKEVEGLVKDDCILASNTSTISITFLAEALERPENFVGMHFFNPVHRMPLVEVIRGEKSSEEAIATTVALASKMGKVPVVVNDCPGFLVNRVLFPYFGAFDLLLKQGADFAHVDKVMEKFGWPMGPAYLIDVVGLDTGVHGAEVMAEGFPDRMKPDYKGAIELLYENKRLGQKNGVGFYKYEMDKRGKPKKVADEATYELLKTTTDSEKQTFDDQAIIDRTMLAFCNETVRCLEDNIVSTPSEADMAMIMGVGFPPFRGGPCRYIDQMGLDNYLALCEKYAHLGKAYEAPQKIRDMAAAGETFYATA.

The segment at M1 to A190 is enoyl-CoA hydratase/isomerase. D298 provides a ligand contact to substrate. Residues H313 to A719 are 3-hydroxyacyl-CoA dehydrogenase. NAD(+) is bound by residues M326, D345, V402–E404, K409, and S431. H452 functions as the For 3-hydroxyacyl-CoA dehydrogenase activity in the catalytic mechanism. N455 provides a ligand contact to NAD(+). N502 contributes to the substrate binding site.

In the N-terminal section; belongs to the enoyl-CoA hydratase/isomerase family. The protein in the C-terminal section; belongs to the 3-hydroxyacyl-CoA dehydrogenase family. Heterotetramer of two alpha chains (FadB) and two beta chains (FadA).

It carries out the reaction a (3S)-3-hydroxyacyl-CoA + NAD(+) = a 3-oxoacyl-CoA + NADH + H(+). The catalysed reaction is a (3S)-3-hydroxyacyl-CoA = a (2E)-enoyl-CoA + H2O. It catalyses the reaction a 4-saturated-(3S)-3-hydroxyacyl-CoA = a (3E)-enoyl-CoA + H2O. The enzyme catalyses (3S)-3-hydroxybutanoyl-CoA = (3R)-3-hydroxybutanoyl-CoA. It carries out the reaction a (3Z)-enoyl-CoA = a 4-saturated (2E)-enoyl-CoA. The catalysed reaction is a (3E)-enoyl-CoA = a 4-saturated (2E)-enoyl-CoA. It functions in the pathway lipid metabolism; fatty acid beta-oxidation. Involved in the aerobic and anaerobic degradation of long-chain fatty acids via beta-oxidation cycle. Catalyzes the formation of 3-oxoacyl-CoA from enoyl-CoA via L-3-hydroxyacyl-CoA. It can also use D-3-hydroxyacyl-CoA and cis-3-enoyl-CoA as substrate. This chain is Fatty acid oxidation complex subunit alpha, found in Psychrobacter arcticus (strain DSM 17307 / VKM B-2377 / 273-4).